Consider the following 177-residue polypeptide: Nuclear export protein (177 aa).

2 consecutive short sequence motifs (nuclear export signal) follow at residues 91–100 (LWLPMKSLSL) and 117–127 (MKHQILTRLKL).

In terms of assembly, binds M1 protein. May interact with human nucleoporins and exportin XPO1/CRM1.

It localises to the virion. Its subcellular location is the host nucleus. Mediates the nuclear export of encapsidated genomic RNAs (ribonucleoproteins, RNPs). Acts as an adapter between viral RNPs complexes and the nuclear export machinery of the cell. Possesses no intrinsic RNA-binding activity, but includes a C-terminal M1-binding domain. This domain is believed to allow recognition of RNPs to which the M1 protein is bound. Because the M1 protein is not available in large quantities until the later stages of infection, such an indirect recognition mechanism probably ensures that genomic RNPs are not exported from the nucleus before sufficient quantities of viral mRNA and progeny genomic RNA have been synthesized. Furthermore, the RNPs enters the cytoplasm only when they have associated with the M1 protein that is necessary to guide them to the plasma membrane. May down-regulate viral RNA synthesis when overproduced. This Homo sapiens (Human) protein is Nuclear export protein (NS).